The sequence spans 305 residues: Homoserine O-acetyltransferase (305 aa).

Catalysis depends on cysteine 142, which acts as the Acyl-thioester intermediate. Substrate-binding residues include lysine 163 and serine 192. Histidine 235 (proton acceptor) is an active-site residue. The active site involves glutamate 237. Arginine 249 is a substrate binding site.

Belongs to the MetA family.

It localises to the cytoplasm. The enzyme catalyses L-homoserine + acetyl-CoA = O-acetyl-L-homoserine + CoA. The protein operates within amino-acid biosynthesis; L-methionine biosynthesis via de novo pathway; O-acetyl-L-homoserine from L-homoserine: step 1/1. Its function is as follows. Transfers an acetyl group from acetyl-CoA to L-homoserine, forming acetyl-L-homoserine. The sequence is that of Homoserine O-acetyltransferase from Phocaeicola vulgatus (strain ATCC 8482 / DSM 1447 / JCM 5826 / CCUG 4940 / NBRC 14291 / NCTC 11154) (Bacteroides vulgatus).